Here is a 444-residue protein sequence, read N- to C-terminus: Homogentisate 1,2-dioxygenase (444 aa).

His298 serves as the catalytic Proton acceptor. The Fe cation site is built by His341 and Glu347. The homogentisate site is built by Tyr356 and His377. Position 377 (His377) interacts with Fe cation.

Belongs to the homogentisate dioxygenase family. In terms of assembly, hexamer; dimer of trimers. Fe cation is required as a cofactor.

The enzyme catalyses homogentisate + O2 = 4-maleylacetoacetate + H(+). It participates in amino-acid degradation; L-phenylalanine degradation; acetoacetate and fumarate from L-phenylalanine: step 4/6. In terms of biological role, involved in the catabolism of homogentisate (2,5-dihydroxyphenylacetate or 2,5-OH-PhAc), a central intermediate in the degradation of phenylalanine and tyrosine. Catalyzes the oxidative ring cleavage of the aromatic ring of homogentisate to yield maleylacetoacetate. This is Homogentisate 1,2-dioxygenase from Burkholderia ambifaria (strain MC40-6).